The sequence spans 245 residues: 6-carboxyhexanoate--CoA ligase (245 aa).

The protein belongs to the BioW family. As to quaternary structure, homodimer. Requires Mg(2+) as cofactor.

The enzyme catalyses heptanedioate + ATP + CoA = 6-carboxyhexanoyl-CoA + AMP + diphosphate. Its pathway is metabolic intermediate metabolism; pimeloyl-CoA biosynthesis; pimeloyl-CoA from pimelate: step 1/1. Catalyzes the transformation of pimelate into pimeloyl-CoA with concomitant hydrolysis of ATP to AMP. This chain is 6-carboxyhexanoate--CoA ligase, found in Sulfurihydrogenibium azorense (strain DSM 15241 / OCM 825 / Az-Fu1).